A 422-amino-acid chain; its full sequence is MSLEEKLNKYSNKLSMTNNLNKIDVYNKKINKYKERQIYSNLKKPQPIDESVISLYSLKNEYQKSPDKMTALGFGVTDVGKPVELLVFDRKKPTNNEVSIEIYYTGICHSDWHFIVGEWKADFPLIPGHELIGRVIDIGPNVDKYSIGDIVCVSPVIDSCGHCKMCTHHIEQHCMNGATEIYNQKTRLPGDIKPSGPITYGGYSNIVIIKQHFVYKFPKNLDIERCAPLMCAGATTYSPLRQAKVGPGMKVGIVGIGGLGHIAVKIAKAMGAHVVAITRTEWKFKDSVNNLGANESILSTNVWQMNQHKGSFDFILSTIPMAHDIVPYIELLKYKATICTVGELFPTVINGMDLAQHPCFLQSSLIAGSDEIKEMLAFCSEHNIMPDVQIIKADKINDTRQKLLESKAKYRYVIDIRASLNK.

Zn(2+) is bound by residues Cys108, His129, Cys160, Cys163, Cys166, Cys174, and Cys231.

Requires Zn(2+) as cofactor.

The protein resides in the host cytoplasm. The protein localises to the virion. The sequence is that of Probable zinc-type alcohol dehydrogenase-like protein L498 from Acanthamoeba polyphaga (Amoeba).